We begin with the raw amino-acid sequence, 599 residues long: MEPMSVKEDLRLFQSTLLQDGLKELLKENKFVDCILKVGDRSLPCHRLIMAACSPYFRELYFTEDGTEKKDANKEVVLENVDPNIMDMIVNYLYSADIDITDDNVQDVFAVANKFQIPSVFTVCVNYLQNKLSLGNCLAIFRMGLVLNCPRLAVSARDFIAEHFETLSKDEEFLEFNAPEFFAIIGCDALNVEKEELVFELLMKWVRKNKENRAKALGDAFEHIRFRLLPEKYLKEKVEKDDIIKADPELIKKLKVIKDAFAGKLPQIKEGEKEGEGENELPGFLNDSQRLGMFNRDLILMINDTAAVAYDANENECFLAAMAEQIPRNHVSITSKKNLLYVAGGLFVDEENKDSPLQCYFYQMDPHSPNWIALPPMPSPRCLFAMGEFENLLFAVAGKDLQSNESLDSVLCYDVDKMKWLETKKLPLRIHGHSVISQNGLVYCIGGKTDENKTINKMFAYNHKKSEWKELAAMKTPRSMFGATVHKGKIVVVGGVNEDGLLSSCEAYDFGTNKWEVFAEFAQERSSVNVLSVDGVLYAVAGFTIKENEDKQCVPSEITDIWQYEEDKKQWSGMIGEMRYASGASCVSMRLNVAKMPKL.

The BTB domain maps to 32 to 102; sequence VDCILKVGDR…LYSADIDITD (71 aa). A BACK domain is found at 137–239; it reads CLAIFRMGLV…PEKYLKEKVE (103 aa). Kelch repeat units lie at residues 339–391, 393–440, 441–488, 489–535, and 537–591; these read LLYV…EFEN, LFAV…SQNG, LVYC…VHKG, KIVV…SVDG, and LYAV…SMRL.

It is found in the cytoplasm. The protein localises to the cytoskeleton. The protein resides in the sarcoplasmic reticulum membrane. It localises to the endoplasmic reticulum membrane. Functionally, involved in skeletal muscle development and differentiation. The protein is Kelch-like protein 41a (klhl41a) of Danio rerio (Zebrafish).